The chain runs to 76 residues: Small ribosomal subunit protein bS18 (76 aa).

The protein belongs to the bacterial ribosomal protein bS18 family. In terms of assembly, part of the 30S ribosomal subunit. Forms a tight heterodimer with protein bS6.

In terms of biological role, binds as a heterodimer with protein bS6 to the central domain of the 16S rRNA, where it helps stabilize the platform of the 30S subunit. In Azotobacter vinelandii (strain DJ / ATCC BAA-1303), this protein is Small ribosomal subunit protein bS18.